Consider the following 137-residue polypeptide: Competence protein ComGG (137 aa).

A helical membrane pass occupies residues 10–30 (GVLLYAVTIAAIFSLLLQFYL). The interval 106–137 (EKRDKKEEVATDSSEKVEKKKSEEKPEKKENS) is disordered.

The transformation pili are flexible filaments, consisting mainly of the major pilin ComGC and smaller amounts of the minor pilins, including at least ComGD, ComGF and ComGG, and perhaps ComGE. Interacts with ComGC; the interaction is probably direct. Interacts with ComGD. Interacts with ComGE. Interacts with ComGF. May act as a link between ComGC, ComGD and ComGF.

Its subcellular location is the fimbrium. The protein resides in the cell membrane. Functionally, required for formation of the type IV-like pilus (T4P) that plays a role in transformation. Transformation pili are dynamically extended and retracted, perhaps thereby promoting DNA uptake and transformation. Required for transformation. This chain is Competence protein ComGG, found in Streptococcus pneumoniae (strain ATCC BAA-255 / R6).